We begin with the raw amino-acid sequence, 68 residues long: Amphipathic peptide VmCT1 (68 aa).

An N-terminal signal peptide occupies residues 1–23 (MKTQFVILIVAVVLLQLISHSEA). Phenylalanine 36 carries the post-translational modification Phenylalanine amide. The propeptide occupies 40–68 (GLRNFDDLDDTFEPEMSEADLKYLQDLLR).

Belongs to the non-disulfide-bridged peptide (NDBP) superfamily. Short antimicrobial peptide (group 4) family. In terms of tissue distribution, expressed by the venom gland.

Its subcellular location is the secreted. The protein resides in the target cell membrane. Functionally, cationic amphipathic peptide with antibacterial activities against both Gram-positive and Gram-negative bacteria. Also shows antifungal activities. Is mildly hemolytic against human erythrocytes. In addition, when tested in vitro on the parasite Trypanosoma cruzi (responsible of the Chagas disease), is able to reduce the number of the three forms (epimastigote, trypomastigote and amastigote). Also shows antiplasmodial and cytotoxic activity (tested on Plasmodium gallinaceum, and MCF-7 breast cancer cell line). The sequence is that of Amphipathic peptide VmCT1 from Vaejovis mexicanus smithi (Mexican scorpion).